A 508-amino-acid polypeptide reads, in one-letter code: MIKRALLSTYKKEKVVDFAQTLQELGIEIISTGGTAKKLQENSIEVTPVEEITNFPEILNGRVKTLNPFIQGGILARRENKQDMETLENLKIEPIDLIYVNLYPFVEVANKRDVDMNELIEFIDIGGPTMIRSAAKNYKDVIVVVDESDLEQISAKLKTPEELDENYRLYLASKAFNLTAFYDSCISNYLNAQLTNKDDFQEFLTVPFEKSYEMRYGENPHQSAIFYKNTLTSGAMTSFEQLNGKELSFNNLRDADSAWKAVNEFEDTACCCLKHSSPCGIALGDSVIEAYQKAYSCDPVSIFGGIVAFNRKIDVETALELKKIFLEIIMAPEYDEEALDILKEKKNLRILKMNSKPIDTYEYVSVDGGILVQEVDKRVINEFEVVTETKVSEEIKEELLFAWKAVKHVKSNAIVVSKNKATTGIGAGQPNRIWAATQALERSKDKGGDVLASDAFFPFSDVVEKAAEYGIKAIIQPGGSIRDDESIQACSKYGIAMVFTGMRHFKHI.

The MGS-like domain maps to 1-145 (MIKRALLSTY…KNYKDVIVVV (145 aa)).

This sequence belongs to the PurH family.

The catalysed reaction is (6R)-10-formyltetrahydrofolate + 5-amino-1-(5-phospho-beta-D-ribosyl)imidazole-4-carboxamide = 5-formamido-1-(5-phospho-D-ribosyl)imidazole-4-carboxamide + (6S)-5,6,7,8-tetrahydrofolate. It carries out the reaction IMP + H2O = 5-formamido-1-(5-phospho-D-ribosyl)imidazole-4-carboxamide. It participates in purine metabolism; IMP biosynthesis via de novo pathway; 5-formamido-1-(5-phospho-D-ribosyl)imidazole-4-carboxamide from 5-amino-1-(5-phospho-D-ribosyl)imidazole-4-carboxamide (10-formyl THF route): step 1/1. Its pathway is purine metabolism; IMP biosynthesis via de novo pathway; IMP from 5-formamido-1-(5-phospho-D-ribosyl)imidazole-4-carboxamide: step 1/1. This Petrotoga mobilis (strain DSM 10674 / SJ95) protein is Bifunctional purine biosynthesis protein PurH.